Reading from the N-terminus, the 289-residue chain is ATP synthase gamma chain (289 aa).

Belongs to the ATPase gamma chain family. In terms of assembly, F-type ATPases have 2 components, CF(1) - the catalytic core - and CF(0) - the membrane proton channel. CF(1) has five subunits: alpha(3), beta(3), gamma(1), delta(1), epsilon(1). CF(0) has three main subunits: a, b and c.

Its subcellular location is the cell inner membrane. In terms of biological role, produces ATP from ADP in the presence of a proton gradient across the membrane. The gamma chain is believed to be important in regulating ATPase activity and the flow of protons through the CF(0) complex. This chain is ATP synthase gamma chain, found in Haemophilus influenzae (strain ATCC 51907 / DSM 11121 / KW20 / Rd).